The chain runs to 821 residues: Dapper homolog 1 (821 aa).

The stretch at 88–136 (LNTEEKLLEENILLLRKQLNCLRRRDAGLINQLQELDRQISDLRLDTET) forms a coiled coil. Disordered regions lie at residues 288-312 (SKPG…SSWH), 386-432 (QDAS…STTN), 564-615 (NSAS…KTKR), and 627-655 (ERHT…VLAK). A compositionally biased stretch (low complexity) spans 388 to 400 (ASATSTEPSTASP). The span at 401–432 (QRQWSAESKGGTPQNGAYLSSSQPQNSYSTTN) shows a compositional bias: polar residues. Composition is skewed to basic residues over residues 584-593 (DKHRTGSRRT), 601-615 (HLHK…KTKR), and 639-649 (AQRHHGHHRHH). The PDZ-binding motif lies at 818-821 (MTTV).

This sequence belongs to the dapper family. As to quaternary structure, interacts with dvl2.

The protein resides in the cytoplasm. Functionally, involved in regulation of intracellular signaling pathways during development. Specifically thought to play a role in canonical and/or non-canonical Wnt signaling pathways through interaction with DSH (Dishevelled) family proteins. Binds to dvl2 and may regulate the degradation of ctnnb1/beta-catenin, thereby modulating the transcriptional activation of target genes of the Wnt signaling pathway. Seems to activate the canonical Wnt signaling pathway. This chain is Dapper homolog 1 (dact1), found in Danio rerio (Zebrafish).